Here is a 310-residue protein sequence, read N- to C-terminus: MILTLTLNPSVDISYPLTALKLDDVNRVQEVSKTAGGKGLNVTRVLAQVGEPVLASGFIGGELGQFIAKKLDLAGIKHAFYNIKGETRNCIAILHEGQQTEILEQGPEIDNQEAAGFIKHFEQLLEKVEAVAISGSLPKGLNQDYYAQIIERCQNKGVPVILDCSGATLQTVLENPYKPTVIKPNISELYQLLNQPLDESLESLKQAVSQPLFEGVEWIIVSLGAQGAFAKHNHTFYRVNIPTISVLNPVGSGDSTVAGITSAILNHENDLDLLKKANTLGMLNAQEAQTGYVNLNNYDDLFNQIEVLEV.

It belongs to the carbohydrate kinase PfkB family. LacC subfamily.

It carries out the reaction D-tagatofuranose 6-phosphate + ATP = D-tagatofuranose 1,6-bisphosphate + ADP + H(+). It participates in carbohydrate metabolism; D-tagatose 6-phosphate degradation; D-glyceraldehyde 3-phosphate and glycerone phosphate from D-tagatose 6-phosphate: step 1/2. This Staphylococcus aureus (strain bovine RF122 / ET3-1) protein is Tagatose-6-phosphate kinase.